We begin with the raw amino-acid sequence, 84 residues long: Sec-independent protein translocase protein TatA (84 aa).

A helical membrane pass occupies residues 1–21 (MGGFSIWHWLIVLLIVVMVFG). Residues 40–84 (KDGMKDGGQSPADEKPVVPASQVTNAQAADKAERNTIDVEARQKS) are disordered. Basic and acidic residues predominate over residues 69-84 (DKAERNTIDVEARQKS).

This sequence belongs to the TatA/E family. In terms of assembly, the Tat system comprises two distinct complexes: a TatABC complex, containing multiple copies of TatA, TatB and TatC subunits, and a separate TatA complex, containing only TatA subunits. Substrates initially bind to the TatABC complex, which probably triggers association of the separate TatA complex to form the active translocon.

The protein localises to the cell inner membrane. In terms of biological role, part of the twin-arginine translocation (Tat) system that transports large folded proteins containing a characteristic twin-arginine motif in their signal peptide across membranes. TatA could form the protein-conducting channel of the Tat system. The chain is Sec-independent protein translocase protein TatA from Polaromonas naphthalenivorans (strain CJ2).